Consider the following 112-residue polypeptide: Nucleoid-associated protein CPR_0056 (112 aa).

The segment covering 91-100 (ASEETSEKMG) has biased composition (basic and acidic residues). The tract at residues 91 to 112 (ASEETSEKMGKLTGGMGMPGLF) is disordered. A compositionally biased stretch (gly residues) spans 102-112 (LTGGMGMPGLF).

The protein belongs to the YbaB/EbfC family. Homodimer.

The protein localises to the cytoplasm. It is found in the nucleoid. Binds to DNA and alters its conformation. May be involved in regulation of gene expression, nucleoid organization and DNA protection. In Clostridium perfringens (strain SM101 / Type A), this protein is Nucleoid-associated protein CPR_0056.